The chain runs to 237 residues: uncharacterized protein (237 aa).

The DPCK domain occupies 13–218 (VVGLSGGVAT…KSWKPYIFRV (206 aa)). An ATP-binding site is contributed by 18-25 (GGVATGKS).

Belongs to the CoaE family.

This is an uncharacterized protein from Caenorhabditis elegans.